The sequence spans 505 residues: 2-methylcitrate dehydratase (505 aa).

It belongs to the PrpD family. As to quaternary structure, monomer.

It catalyses the reaction (2S,3S)-2-methylcitrate = 2-methyl-cis-aconitate + H2O. It carries out the reaction citrate = D-threo-isocitrate. The protein operates within organic acid metabolism; propanoate degradation. It functions in the pathway carbohydrate metabolism; tricarboxylic acid cycle; isocitrate from oxaloacetate: step 1/2. In terms of biological role, involved in the catabolism of short chain fatty acids (SCFA) via the tricarboxylic acid (TCA)(acetyl degradation route) and via the 2-methylcitrate cycle I (propionate degradation route). Catalyzes the dehydration of 2-methylcitrate (2-MC) to yield the cis isomer of 2-methyl-aconitate. Could also catalyze the dehydration of citrate and the hydration of cis-aconitate. The polypeptide is 2-methylcitrate dehydratase (Mycobacterium tuberculosis (strain ATCC 35801 / TMC 107 / Erdman)).